The chain runs to 317 residues: Glucose-6-phosphate isomerase, cytosolic 2B (317 aa).

The active-site Proton donor is glutamate 108. Active-site residues include histidine 139 and lysine 264.

Belongs to the GPI family. Homodimer.

The protein resides in the cytoplasm. The enzyme catalyses alpha-D-glucose 6-phosphate = beta-D-fructose 6-phosphate. The protein operates within carbohydrate degradation; glycolysis; D-glyceraldehyde 3-phosphate and glycerone phosphate from D-glucose: step 2/4. In Clarkia lewisii (Farewell-to-spring), this protein is Glucose-6-phosphate isomerase, cytosolic 2B (PGIC2-B).